The following is a 276-amino-acid chain: 5-deoxy-glucuronate isomerase (276 aa).

This sequence belongs to the isomerase IolB family.

The catalysed reaction is 5-deoxy-D-glucuronate = 5-dehydro-2-deoxy-D-gluconate. The protein operates within polyol metabolism; myo-inositol degradation into acetyl-CoA; acetyl-CoA from myo-inositol: step 4/7. Its function is as follows. Involved in the isomerization of 5-deoxy-glucuronate (5DG) to 5-dehydro-2-deoxy-D-gluconate (DKG or 2-deoxy-5-keto-D-gluconate). This chain is 5-deoxy-glucuronate isomerase, found in Geobacillus kaustophilus (strain HTA426).